Here is a 449-residue protein sequence, read N- to C-terminus: Probable phosphoglucosamine mutase (449 aa).

Serine 96 (phosphoserine intermediate) is an active-site residue. The Mg(2+) site is built by serine 96, aspartate 233, aspartate 235, and aspartate 237. At serine 96 the chain carries Phosphoserine.

This sequence belongs to the phosphohexose mutase family. Mg(2+) serves as cofactor. Activated by phosphorylation.

The catalysed reaction is alpha-D-glucosamine 1-phosphate = D-glucosamine 6-phosphate. Its function is as follows. Catalyzes the conversion of glucosamine-6-phosphate to glucosamine-1-phosphate. Does not display phosphoglucomutase (PGM) or phosphomannomutase (PMM) activities. This chain is Probable phosphoglucosamine mutase (glmM), found in Thermococcus kodakarensis (strain ATCC BAA-918 / JCM 12380 / KOD1) (Pyrococcus kodakaraensis (strain KOD1)).